The sequence spans 160 residues: Growth arrest and DNA damage-inducible protein GADD45 beta (160 aa).

Belongs to the GADD45 family. As to quaternary structure, interacts with GADD45GIP1.

Its function is as follows. Involved in the regulation of growth and apoptosis. Mediates activation of stress-responsive MTK1/MEKK4 MAPKKK. This is Growth arrest and DNA damage-inducible protein GADD45 beta (GADD45B) from Bos taurus (Bovine).